The chain runs to 496 residues: Rhamnulokinase (496 aa).

An ATP-binding site is contributed by 13 to 17 (ASSGR). Residues Gly83 and 236-238 (HDT) contribute to the substrate site. The active-site Proton acceptor is the Asp237. ATP is bound at residue Thr259. Asn296 is a binding site for substrate. ATP is bound at residue Gln304. A disulfide bridge connects residues Cys353 and Cys370. Gly402 contacts ATP. Cys413 and Cys417 form a disulfide bridge.

The protein belongs to the rhamnulokinase family. The cofactor is Mg(2+).

It catalyses the reaction L-rhamnulose + ATP = L-rhamnulose 1-phosphate + ADP + H(+). The protein operates within carbohydrate degradation; L-rhamnose degradation; glycerone phosphate from L-rhamnose: step 2/3. Functionally, involved in the catabolism of L-rhamnose (6-deoxy-L-mannose). Catalyzes the transfer of the gamma-phosphate group from ATP to the 1-hydroxyl group of L-rhamnulose to yield L-rhamnulose 1-phosphate. The protein is Rhamnulokinase of Pectobacterium carotovorum subsp. carotovorum (strain PC1).